The chain runs to 343 residues: 4-hydroxy-2-oxovalerate aldolase (343 aa).

Residues 4–254 (PRLTDTTLRD…NPGLDVFSLM (251 aa)) enclose the Pyruvate carboxyltransferase domain. 12 to 13 (RD) is a binding site for substrate. Asp13 serves as a coordination point for Mn(2+). Catalysis depends on His16, which acts as the Proton acceptor. Residues Ser166 and His193 each coordinate substrate. Mn(2+) is bound by residues His193 and His195. Tyr284 is a substrate binding site.

It belongs to the 4-hydroxy-2-oxovalerate aldolase family.

The enzyme catalyses (S)-4-hydroxy-2-oxopentanoate = acetaldehyde + pyruvate. The protein is 4-hydroxy-2-oxovalerate aldolase of Chloroflexus aurantiacus (strain ATCC 29364 / DSM 637 / Y-400-fl).